We begin with the raw amino-acid sequence, 61 residues long: Large ribosomal subunit protein uL30 (61 aa).

It belongs to the universal ribosomal protein uL30 family. Part of the 50S ribosomal subunit.

In Bifidobacterium longum (strain DJO10A), this protein is Large ribosomal subunit protein uL30.